The sequence spans 764 residues: 5-methyltetrahydropteroyltriglutamate--homocysteine methyltransferase (764 aa).

Residues 16 to 19 and lysine 115 each bind 5-methyltetrahydropteroyltri-L-glutamate; that span reads RELK. L-homocysteine contacts are provided by residues 435-437 and glutamate 488; that span reads IGS. L-methionine is bound by residues 435–437 and glutamate 488; that span reads IGS. 5-methyltetrahydropteroyltri-L-glutamate is bound by residues 519 to 520 and tryptophan 565; that span reads RC. Aspartate 603 is a binding site for L-homocysteine. Aspartate 603 serves as a coordination point for L-methionine. Glutamate 609 lines the 5-methyltetrahydropteroyltri-L-glutamate pocket. Zn(2+) is bound by residues histidine 645, cysteine 647, and glutamate 669. Catalysis depends on histidine 698, which acts as the Proton donor. Position 730 (cysteine 730) interacts with Zn(2+).

Belongs to the vitamin-B12 independent methionine synthase family. The cofactor is Zn(2+).

The catalysed reaction is 5-methyltetrahydropteroyltri-L-glutamate + L-homocysteine = tetrahydropteroyltri-L-glutamate + L-methionine. Its pathway is amino-acid biosynthesis; L-methionine biosynthesis via de novo pathway; L-methionine from L-homocysteine (MetE route): step 1/1. Functionally, catalyzes the transfer of a methyl group from 5-methyltetrahydrofolate to homocysteine resulting in methionine formation. The protein is 5-methyltetrahydropteroyltriglutamate--homocysteine methyltransferase of Burkholderia pseudomallei (strain 668).